The following is a 101-amino-acid chain: Small ribosomal subunit protein uS14 (101 aa).

The interval 1–25 (MAKVSAIQKNKSRQKKSQRLHNKRS) is disordered. Basic residues predominate over residues 10–25 (NKSRQKKSQRLHNKRS).

Belongs to the universal ribosomal protein uS14 family. As to quaternary structure, part of the 30S ribosomal subunit. Contacts proteins S3 and S10.

Its function is as follows. Binds 16S rRNA, required for the assembly of 30S particles and may also be responsible for determining the conformation of the 16S rRNA at the A site. The protein is Small ribosomal subunit protein uS14 of Rickettsia typhi (strain ATCC VR-144 / Wilmington).